The primary structure comprises 463 residues: Putative sodium-coupled neutral amino acid transporter 11 (463 aa).

Positions 1–27 are disordered; sequence MGYPGQRPVIPPQSHRDDRETLVSEHK. Residues 14–25 show a composition bias toward basic and acidic residues; that stretch reads SHRDDRETLVSE. Helical transmembrane passes span 38-58, 65-85, 105-125, 150-170, 178-198, 225-245, 256-276, 298-320, 336-356, 358-378, and 397-417; these read AVFN…PYSM, LGIL…ILLI, GFPG…IAMI, LLIG…LPLS, LGKI…IVVA, VGVM…YGSL, IIHV…TCGY, VTFG…CFVT, VCHI…SLLI, CLGI…IFII, and IMSC…FVMA. Asparagine 437, asparagine 442, and asparagine 458 each carry an N-linked (GlcNAc...) asparagine glycan.

This sequence belongs to the amino acid/polyamine transporter 2 family.

The protein localises to the membrane. Its function is as follows. Putative sodium-dependent amino acid/proton antiporter. The polypeptide is Putative sodium-coupled neutral amino acid transporter 11 (SLC38A11) (Bos taurus (Bovine)).